Consider the following 595-residue polypeptide: Torsin-1A-interacting protein 1 (595 aa).

Positions 1–221 (MAGERWQAEG…GNTKTNEREA (221 aa)) are disordered. The Nuclear segment spans residues 1–351 (MAGERWQAEG…NEPSVKIKWW (351 aa)). Residues 24 to 38 (PIREGRRRLDPRNGD) show a composition bias toward basic and acidic residues. Serine 60 is modified (phosphoserine). Composition is skewed to basic and acidic residues over residues 70–101 (FEPR…EVRE) and 115–132 (RAQE…RLEQ). Positions 133–143 (HSQQPQLSPAT) are enriched in polar residues. 6 positions are modified to phosphoserine: serine 134, serine 140, serine 151, serine 153, serine 154, and serine 155. Polar residues predominate over residues 204–215 (LDSTYQTNGNTK). Threonine 235 carries the phosphothreonine modification. 3 positions are modified to phosphoserine: serine 241, serine 244, and serine 255. Disordered stretches follow at residues 250 to 286 (ARSS…PAHE) and 319 to 340 (IQKS…AIHH). The span at 251–262 (RSSDSLESRDEA) shows a compositional bias: basic and acidic residues. Over residues 319-335 (IQKSNFGNQSPSTSRPQ) the composition is skewed to polar residues. Residue lysine 321 forms a Glycyl lysine isopeptide (Lys-Gly) (interchain with G-Cter in SUMO2) linkage. Residue serine 328 is modified to Phosphoserine. The helical transmembrane segment at 352–372 (LLGLVAILAVGLFWFFHTPAV) threads the bilayer. An interaction with TOR1A region spans residues 368 to 595 (HTPAVETTAV…ENTLKAGSCL (228 aa)). The stretch at 373 to 400 (ETTAVQEFQNQMKQLQSKYQSQNEKLWK) forms a coiled coil. At 373-595 (ETTAVQEFQN…ENTLKAGSCL (223 aa)) the chain is on the perinuclear space side. Residue asparagine 411 is glycosylated (N-linked (GlcNAc...) asparagine).

Belongs to the TOR1AIP family. Interacts with ATP1B4. Interacts with TOR1A (ATP-bound). Interacts with TOR1B, TOR2A and TOR3A. Interacts with VIM. As to expression, expressed in the spinal cord and liver (at protein level).

The protein localises to the nucleus inner membrane. In terms of biological role, required for nuclear membrane integrity. Induces TOR1A and TOR1B ATPase activity and is required for their location on the nuclear membrane. Binds to A- and B-type lamins. Possible role in membrane attachment and assembly of the nuclear lamina. In Mus musculus (Mouse), this protein is Torsin-1A-interacting protein 1 (Tor1aip1).